A 336-amino-acid chain; its full sequence is Dihydroorotate dehydrogenase (quinone) (336 aa).

FMN-binding positions include 62-66 (AGLDK) and Thr-86. Residue Lys-66 participates in substrate binding. Residue 111-115 (NRMGF) coordinates substrate. 2 residues coordinate FMN: Asn-139 and Asn-172. Asn-172 is a binding site for substrate. Catalysis depends on Ser-175, which acts as the Nucleophile. A substrate-binding site is contributed by Asn-177. Positions 217 and 245 each coordinate FMN. 246–247 (NT) contributes to the substrate binding site. FMN contacts are provided by residues Gly-268, Gly-297, and 318–319 (YS).

This sequence belongs to the dihydroorotate dehydrogenase family. Type 2 subfamily. In terms of assembly, monomer. FMN is required as a cofactor.

It localises to the cell membrane. It carries out the reaction (S)-dihydroorotate + a quinone = orotate + a quinol. It functions in the pathway pyrimidine metabolism; UMP biosynthesis via de novo pathway; orotate from (S)-dihydroorotate (quinone route): step 1/1. Catalyzes the conversion of dihydroorotate to orotate with quinone as electron acceptor. The chain is Dihydroorotate dehydrogenase (quinone) from Salmonella choleraesuis (strain SC-B67).